A 2343-amino-acid chain; its full sequence is Coagulation factor VIII (2343 aa).

A signal peptide spans 1 to 19; it reads MQVELYTCCFLCLLPFSLS. Plastocyanin-like domains are found at residues 20-199 and 207-343; these read ATRK…LLVC and ERTQ…VDSC. The region spanning 20–343 is the F5/8 type A 1 domain; that stretch reads ATRKYYLGAV…MEAYVKVDSC (324 aa). Residues Asn-233 and Asn-253 are each glycosylated (N-linked (GlcNAc...) asparagine). Residues Tyr-359 and Tyr-408 each carry the sulfotyrosine modification. Plastocyanin-like domains are found at residues 393-567 and 577-724; these read KTWV…LLIC and NQMM…VSSC. Positions 393–724 constitute an F5/8 type A 2 domain; it reads KTWVHYIAAE…MTALLKVSSC (332 aa). The N-linked (GlcNAc...) asparagine glycan is linked to Asn-595. Sulfotyrosine occurs at positions 731, 732, and 736. A compositionally biased stretch (polar residues) spans 752-761; the sequence is PRSFSQNSRH. Disordered stretches follow at residues 752–774 and 828–865; these read PRSFSQNSRHPSTKEKQLKATTT and ADDHSRGAIERNKGPPEVASLRPELRHSEDREFTPEPE. The tract at residues 754 to 1659 is b; the sequence is SFSQNSRHPS…NPPVSKHHQR (906 aa). Composition is skewed to basic and acidic residues over residues 828-841 and 850-861; these read ADDHSRGAIERNKG and PELRHSEDREFT. Asn-877, Asn-921, Asn-937, Asn-938, Asn-956, Asn-1007, Asn-1019, Asn-1037, Asn-1062, Asn-1069, and Asn-1080 each carry an N-linked (GlcNAc...) asparagine glycan. Residues 1124–1147 are disordered; sequence GKNSLSSEQRPSPKQLTSLGSEKS. Over residues 1125-1147 the composition is skewed to polar residues; that stretch reads KNSLSSEQRPSPKQLTSLGSEKS. Residues Asn-1179, Asn-1193, Asn-1275, Asn-1290, Asn-1308, Asn-1341, Asn-1391, Asn-1419, Asn-1429, Asn-1453, Asn-1547, and Asn-1618 are each glycosylated (N-linked (GlcNAc...) asparagine). The span at 1302–1314 shows a compositional bias: polar residues; that stretch reads TTRMSSNASQHVI. Residues 1302–1326 are disordered; it reads TTRMSSNASQHVITQRGKRSLKQPR. Residues 1592–1632 form a disordered region; the sequence is KSQKKSQTNTAFKRKDTILPLGPCENNDSTAAINEGQDKPQ. Sulfotyrosine occurs at positions 1675 and 1691. Plastocyanin-like domains follow at residues 1705–1869 and 1879–2032; these read KTRH…LLIC and GRQV…SKKC. Positions 1705–2032 constitute an F5/8 type A 3 domain; sequence KTRHYFIAAV…TLFLVYSKKC (328 aa). N-linked (GlcNAc...) asparagine glycosylation occurs at Asn-1821. F5/8 type C domains lie at 2032 to 2180 and 2185 to 2337; these read CQTP…LLGC and CSMP…VLGC. 2 disulfide bridges follow: Cys-2032–Cys-2180 and Cys-2185–Cys-2337. 2 N-linked (GlcNAc...) asparagine glycosylation sites follow: Asn-2129 and Asn-2281.

It belongs to the multicopper oxidase family. Interacts with vWF. vWF binding is essential for the stabilization of F8 in circulation. Post-translationally, proteolytically cleaved by cathepsin CTSG to produce a partially activated form.

It is found in the secreted. The protein localises to the extracellular space. Factor VIII, along with calcium and phospholipid, acts as a cofactor for factor IXa when it converts factor X to the activated form, factor Xa. In Canis lupus familiaris (Dog), this protein is Coagulation factor VIII (F8).